We begin with the raw amino-acid sequence, 797 residues long: Protocadherin-3 (797 aa).

The N-terminal stretch at 1 to 30 is a signal peptide; sequence METALAKIPQQRQVFFLTILSLLWKSSSEA. The Extracellular segment spans residues 31–691; the sequence is IRYSMPEETE…DNYDVLTLYL (661 aa). 5 consecutive Cadherin domains span residues 35 to 133, 138 to 242, 247 to 346, 351 to 450, and 455 to 560; these read MPEE…SPEF, MLLT…SPQF, YKVQ…APEL, LTVL…APAF, and YTMF…APFV. Residues N169, N276, and N417 are each glycosylated (N-linked (GlcNAc...) asparagine). Residue N566 is glycosylated (N-linked (GlcNAc...) asparagine). Residues 567–670 enclose the Cadherin 6 domain; the sequence is ASAPCTELLP…VVDGFSQPYL (104 aa). The chain crosses the membrane as a helical span at residues 692-712; sequence VIALASVSSLFLLSVVLFVGV. At 713–797 the chain is on the cytoplasmic side; that stretch reads RLCRRAREAS…AVVHNSVGFY (85 aa).

As to expression, expressed in brain.

It is found in the cell membrane. In terms of biological role, potential calcium-dependent cell-adhesion protein. May be involved in the establishment and maintenance of specific neuronal connections in the brain. The sequence is that of Protocadherin-3 (Pcdh3) from Rattus norvegicus (Rat).